Consider the following 363-residue polypeptide: Fructose-bisphosphate aldolase 1 (363 aa).

Residue Asp34 participates in dihydroxyacetone phosphate binding. Residues Ser36 and Thr39 each coordinate D-glyceraldehyde 3-phosphate. Position 43 (Arg43) interacts with beta-D-fructose 1,6-bisphosphate. A D-glyceraldehyde 3-phosphate-binding site is contributed by Lys107. Lys146 is a dihydroxyacetone phosphate binding site. Glu189 lines the D-glyceraldehyde 3-phosphate pocket. Catalysis depends on Glu189, which acts as the Proton acceptor. Residues Lys231, Ser273, and Gly274 each coordinate dihydroxyacetone phosphate. The Schiff-base intermediate with dihydroxyacetone phosphate role is filled by Lys231. Beta-D-fructose 1,6-bisphosphate contacts are provided by residues 273–275 (SGG) and Ser301. Gly303 and Arg304 together coordinate dihydroxyacetone phosphate. Residue Arg304 coordinates beta-D-fructose 1,6-bisphosphate.

Belongs to the class I fructose-bisphosphate aldolase family. In terms of assembly, homotetramer. Component of a complex, at least composed of ald-1, microneme protein MIC2 and ACT1. Interacts with microneme protein MIC2 (via cytoplasmic tail). Interacts with ACT1 (F-actin).

Its subcellular location is the cytoplasm. The catalysed reaction is beta-D-fructose 1,6-bisphosphate = D-glyceraldehyde 3-phosphate + dihydroxyacetone phosphate. The protein operates within carbohydrate degradation; glycolysis; D-glyceraldehyde 3-phosphate and glycerone phosphate from D-glucose: step 4/4. Plays a key role in glycolysis by catalyzing the cleavage of fructose 1,6-bisphosphate into dihydroxyacetone phosphate and glyceraldehyde 3-phosphate. Forms a bridge between cell surface adhesins and the actin cytoskeleton. Required for parasite invasion of host cells. The polypeptide is Fructose-bisphosphate aldolase 1 (Toxoplasma gondii).